Reading from the N-terminus, the 615-residue chain is MSKKFAHTQEELEKLSLKELENLAASMREKIIQVVSKNGGHLSSNLGAVELSIAMHLVFDAKKDPFIFDVSHQSYTHKLLSGKEEIFDTLRQINGLSGYTKPSEGDYFVAGHSSTSISLAVGACKAIALKGEKRIPVALIGDGALSAGMAYEALNELGDSKFPCVILLNDNEMSISKPIGAISKYLSQAMATQFYQSFKKRIAKMLDILPDSATYMAKRFEESFKLITPGLLFEELGLEYIGPIDGHNLGEIISALKQAKAMQKPCVIHTQTIKGKGYALAEGKHAKWHGVGAFDIDSGESVKKSDTKKSATEIFSKNLLDLASKYENIVGVTAAMPSGTGLDKLIEKYPNRFWDVAIAEQHAVTSMAAMAKEGFKPFIAIYSTFLQRAYDQVIHDCAIMNLNVVFAMDRAGIVGEDGETHQGVFDLSFLAPLPNFTLLAPRDEQMMQNIMEYAYLHQGPIAFRYPRGSFILDKEFNPCEIKLGKAQWLVKNSSEIAFLGYGQGVAKAWQVLRALQEMNNNANLIDLIFAKPLDEELLCELAKKSKIWFIFSENVKIGGIESLINNFLQKYDLHVKVVSFEYEDKFIEHGKTSEVEKNLEKDVNSLLTKVLKFYH.

Residues His-72 and 111–113 contribute to the thiamine diphosphate site; that span reads GHS. Asp-142 lines the Mg(2+) pocket. Residues 143–144, Asn-171, Tyr-278, and Glu-360 contribute to the thiamine diphosphate site; that span reads GA. Asn-171 contacts Mg(2+).

Belongs to the transketolase family. DXPS subfamily. As to quaternary structure, homodimer. It depends on Mg(2+) as a cofactor. The cofactor is thiamine diphosphate.

The catalysed reaction is D-glyceraldehyde 3-phosphate + pyruvate + H(+) = 1-deoxy-D-xylulose 5-phosphate + CO2. It functions in the pathway metabolic intermediate biosynthesis; 1-deoxy-D-xylulose 5-phosphate biosynthesis; 1-deoxy-D-xylulose 5-phosphate from D-glyceraldehyde 3-phosphate and pyruvate: step 1/1. In terms of biological role, catalyzes the acyloin condensation reaction between C atoms 2 and 3 of pyruvate and glyceraldehyde 3-phosphate to yield 1-deoxy-D-xylulose-5-phosphate (DXP). The chain is 1-deoxy-D-xylulose-5-phosphate synthase from Campylobacter jejuni subsp. jejuni serotype O:23/36 (strain 81-176).